A 514-amino-acid polypeptide reads, in one-letter code: Cytochrome c-552 (514 aa).

The N-terminal stretch at 1-21 is a signal peptide; the sequence is MKFKLLLAGSLVAVGAMALLA. The heme c site is built by histidine 101, cysteine 129, cysteine 132, lysine 133, cysteine 167, cysteine 170, histidine 171, cysteine 210, cysteine 213, and histidine 214. Ca(2+) contacts are provided by glutamate 216, tyrosine 217, lysine 279, and glutamine 281. Tyrosine 217 contributes to the substrate binding site. Histidine 282 contacts substrate. Heme c is bound by residues histidine 293, cysteine 300, cysteine 303, histidine 304, histidine 318, cysteine 332, cysteine 335, histidine 336, and histidine 411.

The protein belongs to the cytochrome c-552 family. As to quaternary structure, homodimer. Probably also exists as a membrane-associated heterooligomeric complex. Ca(2+) serves as cofactor. The cofactor is heme c.

It is found in the periplasm. It carries out the reaction 6 Fe(III)-[cytochrome c] + NH4(+) + 2 H2O = 6 Fe(II)-[cytochrome c] + nitrite + 8 H(+). The protein operates within nitrogen metabolism; nitrate reduction (assimilation). In terms of biological role, catalyzes the reduction of nitrite to ammonia, consuming six electrons in the process. Has very low activity toward hydroxylamine, and even lower activity toward sulfite. Sulfite reductase activity is maximal at neutral pH. The sequence is that of Cytochrome c-552 (nrfA) from Sulfurospirillum deleyianum.